The following is a 415-amino-acid chain: GPI mannosyltransferase 1 (415 aa).

9 helical membrane-spanning segments follow: residues 8-28, 82-102, 134-154, 158-178, 222-242, 284-304, 329-349, 354-374, and 387-407; these read PSLVFGAAIVLRAILLVYGAW, FFSFGKVLFALSDVVAGWLIA, TRGSSEGLLCVLVIALLWAVL, ITLAGVLLGLSVHFKIYPFVY, LLLTTTALATFSGLNISMYIL, FESLAFIPQLLLSVVVIPIVL, SQYFLWYLIFLPFYLPSSSLM, LGITVTALWVIAQALWLQQGY, and GLFLASLGFFAVNIWILGIII.

Belongs to the PIGM family.

Its subcellular location is the endoplasmic reticulum membrane. It participates in glycolipid biosynthesis; glycosylphosphatidylinositol-anchor biosynthesis. Mannosyltransferase involved in glycosylphosphatidylinositol-anchor biosynthesis. Transfers the first alpha-1,4-mannose to GlcN-acyl-PI during GPI precursor assembly. Required for cell wall integrity. The protein is GPI mannosyltransferase 1 (gpi14) of Aspergillus oryzae (strain ATCC 42149 / RIB 40) (Yellow koji mold).